A 715-amino-acid polypeptide reads, in one-letter code: Tegument protein UL46 (715 aa).

Disordered regions lie at residues 432-513 (WSAG…CAAQ), 585-605 (DDAR…APYE), and 659-680 (GSAL…PSPV). A compositionally biased stretch (gly residues) spans 444 to 455 (GPGGHRAGGGTV). Composition is skewed to low complexity over residues 456–467 (GKRFSGPARQRA) and 475–488 (PTLD…VPEA). Residues 664-677 (SPPPRPPPPPPLSP) show a composition bias toward pro residues.

The protein belongs to the herpesviridae HHV-1 VP11/12 protein family. Interacts with VP16. Interacts with host LCK, PIK3R1, SHC1 AND GRB2; these interactions promote the activation of the PI3K/AKT pathway. Interacts with host YWHAB. Interacts with ICP0; this interaction targets UL46 for degradation by the proteasome. Post-translationally, phosphorylated by host LCK. The phosphorylation seems to be lymphocyte-specific.

The protein localises to the virion tegument. It is found in the host cell membrane. Plays a role in the activation of the host PI3K/AKT pathway to promote cell survival. Interacts with and activates host LCK and thereby recruits downstream partners SHC1, GRB2 and PI3KR1 in order to activate the PI3K pathway by phosphorylating host AKT on its activating residues. This mechanism is inhibited by the viral protein US3 that instead promotes incorporation of UL46 into virions. This is Tegument protein UL46 from Human herpesvirus 1 (strain F) (HHV-1).